We begin with the raw amino-acid sequence, 423 residues long: Alpha-1-antichymotrypsin (423 aa).

The N-terminal stretch at 1 to 23 is a signal peptide; it reads MERMLPLLALGLLAAGFCPAVLC. Residues asparagine 33, asparagine 93, asparagine 106, asparagine 127, and asparagine 186 are each glycosylated (N-linked (GlcNAc...) asparagine). The DNA-binding element occupies 235 to 237; the sequence is KKK. The N-linked (GlcNAc...) asparagine glycan is linked to asparagine 271. Residues 369 to 394 are RCL; it reads GTEASAATAVKITLLSALVETRTIVR. An O-glycosylated at one site region spans residues 381-389; the sequence is TLLSALVET.

Belongs to the serpin family. Interacts with DNAJC1. N- and O-glycosylated. In terms of tissue distribution, plasma. Synthesized in the liver. Like the related alpha-1-antitrypsin, its concentration increases in the acute phase of inflammation or infection. Found in the amyloid plaques from the hippocampus of Alzheimer disease brains.

The protein localises to the secreted. In terms of biological role, although its physiological function is unclear, it can inhibit neutrophil cathepsin G and mast cell chymase, both of which can convert angiotensin-1 to the active angiotensin-2. In Homo sapiens (Human), this protein is Alpha-1-antichymotrypsin (SERPINA3).